The primary structure comprises 161 residues: 2-C-methyl-D-erythritol 2,4-cyclodiphosphate synthase (161 aa).

A divalent metal cation-binding residues include D9 and H11. Residues 9 to 11 (DFH) and 37 to 38 (HS) contribute to the 4-CDP-2-C-methyl-D-erythritol 2-phosphate site. H45 lines the a divalent metal cation pocket. Residues 59 to 61 (DIG), 64 to 68 (FPDTD), 135 to 138 (TTTE), and R145 each bind 4-CDP-2-C-methyl-D-erythritol 2-phosphate.

Belongs to the IspF family. As to quaternary structure, homotrimer. It depends on a divalent metal cation as a cofactor.

The catalysed reaction is 4-CDP-2-C-methyl-D-erythritol 2-phosphate = 2-C-methyl-D-erythritol 2,4-cyclic diphosphate + CMP. The protein operates within isoprenoid biosynthesis; isopentenyl diphosphate biosynthesis via DXP pathway; isopentenyl diphosphate from 1-deoxy-D-xylulose 5-phosphate: step 4/6. In terms of biological role, involved in the biosynthesis of isopentenyl diphosphate (IPP) and dimethylallyl diphosphate (DMAPP), two major building blocks of isoprenoid compounds. Catalyzes the conversion of 4-diphosphocytidyl-2-C-methyl-D-erythritol 2-phosphate (CDP-ME2P) to 2-C-methyl-D-erythritol 2,4-cyclodiphosphate (ME-CPP) with a corresponding release of cytidine 5-monophosphate (CMP). In Leptospira interrogans serogroup Icterohaemorrhagiae serovar copenhageni (strain Fiocruz L1-130), this protein is 2-C-methyl-D-erythritol 2,4-cyclodiphosphate synthase.